We begin with the raw amino-acid sequence, 149 residues long: Transcriptional repressor NrdR (149 aa).

A zinc finger spans residues 3 to 34 (CPFCSATDTKVIDSRLVAEGHQVRRRRECTEC). An ATP-cone domain is found at 49–139 (PRVIKRDGSR…VYRAFEDVSE (91 aa)).

It belongs to the NrdR family. It depends on Zn(2+) as a cofactor.

Its function is as follows. Negatively regulates transcription of bacterial ribonucleotide reductase nrd genes and operons by binding to NrdR-boxes. The chain is Transcriptional repressor NrdR from Shewanella putrefaciens (strain CN-32 / ATCC BAA-453).